Reading from the N-terminus, the 348-residue chain is Phosphate acyltransferase (348 aa).

This sequence belongs to the PlsX family. In terms of assembly, homodimer. Probably interacts with PlsY.

Its subcellular location is the cytoplasm. It carries out the reaction a fatty acyl-[ACP] + phosphate = an acyl phosphate + holo-[ACP]. It functions in the pathway lipid metabolism; phospholipid metabolism. Functionally, catalyzes the reversible formation of acyl-phosphate (acyl-PO(4)) from acyl-[acyl-carrier-protein] (acyl-ACP). This enzyme utilizes acyl-ACP as fatty acyl donor, but not acyl-CoA. This Neisseria gonorrhoeae (strain ATCC 700825 / FA 1090) protein is Phosphate acyltransferase.